The following is a 118-amino-acid chain: Waprin-Enh1 (118 aa).

Positions 1-24 (MKTLTGLLLVGLLALWIGLPSTSS) are cleaved as a signal peptide. 2 WAP domains span residues 25 to 72 (KILF…RSCR) and 74 to 118 (PPVL…RICK). 8 disulfide bridges follow: cysteine 30/cysteine 63, cysteine 40/cysteine 67, cysteine 50/cysteine 62, cysteine 56/cysteine 71, cysteine 81/cysteine 109, cysteine 88/cysteine 113, cysteine 96/cysteine 108, and cysteine 102/cysteine 117.

It belongs to the venom waprin family. As to expression, expressed by the venom gland.

It localises to the secreted. In terms of biological role, damages membranes of susceptible bacteria. Has no hemolytic activity. Not toxic to mice. Does not inhibit the proteinases elastase and cathepsin G. This chain is Waprin-Enh1, found in Pseudoferania polylepis (Macleay's water snake).